A 304-amino-acid polypeptide reads, in one-letter code: Pyridoxal 5'-phosphate synthase subunit PdxS (304 aa).

Residue D34 coordinates D-ribose 5-phosphate. The active-site Schiff-base intermediate with D-ribose 5-phosphate is K91. G163 lines the D-ribose 5-phosphate pocket. R175 lines the D-glyceraldehyde 3-phosphate pocket. D-ribose 5-phosphate is bound by residues G224 and 245 to 246 (GS).

This sequence belongs to the PdxS/SNZ family. As to quaternary structure, in the presence of PdxT, forms a dodecamer of heterodimers.

The catalysed reaction is aldehydo-D-ribose 5-phosphate + D-glyceraldehyde 3-phosphate + L-glutamine = pyridoxal 5'-phosphate + L-glutamate + phosphate + 3 H2O + H(+). It functions in the pathway cofactor biosynthesis; pyridoxal 5'-phosphate biosynthesis. In terms of biological role, catalyzes the formation of pyridoxal 5'-phosphate from ribose 5-phosphate (RBP), glyceraldehyde 3-phosphate (G3P) and ammonia. The ammonia is provided by the PdxT subunit. Can also use ribulose 5-phosphate and dihydroxyacetone phosphate as substrates, resulting from enzyme-catalyzed isomerization of RBP and G3P, respectively. The chain is Pyridoxal 5'-phosphate synthase subunit PdxS from Streptomyces avermitilis (strain ATCC 31267 / DSM 46492 / JCM 5070 / NBRC 14893 / NCIMB 12804 / NRRL 8165 / MA-4680).